A 426-amino-acid polypeptide reads, in one-letter code: Histidine--tRNA ligase (426 aa).

The protein belongs to the class-II aminoacyl-tRNA synthetase family. In terms of assembly, homodimer.

The protein resides in the cytoplasm. It catalyses the reaction tRNA(His) + L-histidine + ATP = L-histidyl-tRNA(His) + AMP + diphosphate + H(+). The chain is Histidine--tRNA ligase from Streptococcus pyogenes serotype M6 (strain ATCC BAA-946 / MGAS10394).